A 451-amino-acid polypeptide reads, in one-letter code: Adenylyltransferase and sulfurtransferase MOCS3-1 (451 aa).

The interval 42–62 (GEDSDEAEESSNDMPTPQTKL) is disordered. Residues 43-52 (EDSDEAEESS) show a composition bias toward acidic residues. Threonine 60 carries the post-translational modification Phosphothreonine. Residues glycine 99, aspartate 120, 127–131 (SNLHR), lysine 144, and 188–189 (DN) each bind ATP. The Zn(2+) site is built by cysteine 229 and cysteine 232. The active-site Glycyl thioester intermediate; for adenylyltransferase activity is the cysteine 246. Cysteine 304 and cysteine 307 together coordinate Zn(2+). The Rhodanese domain maps to 353-449 (QSQPHLLLDV…WTGSVDATFP (97 aa)). Residue cysteine 408 is the Cysteine persulfide intermediate; for sulfurtransferase activity of the active site.

It in the N-terminal section; belongs to the HesA/MoeB/ThiF family. UBA4 subfamily. It depends on Zn(2+) as a cofactor.

It localises to the cytoplasm. The enzyme catalyses [molybdopterin-synthase sulfur-carrier protein]-C-terminal Gly-Gly + ATP + H(+) = [molybdopterin-synthase sulfur-carrier protein]-C-terminal Gly-Gly-AMP + diphosphate. It carries out the reaction [molybdopterin-synthase sulfur-carrier protein]-C-terminal Gly-Gly-AMP + S-sulfanyl-L-cysteinyl-[cysteine desulfurase] + AH2 = [molybdopterin-synthase sulfur-carrier protein]-C-terminal-Gly-aminoethanethioate + L-cysteinyl-[cysteine desulfurase] + A + AMP + 2 H(+). It functions in the pathway tRNA modification; 5-methoxycarbonylmethyl-2-thiouridine-tRNA biosynthesis. The protein operates within cofactor biosynthesis; molybdopterin biosynthesis. In terms of biological role, plays a central role in 2-thiolation of mcm(5)S(2)U at tRNA wobble positions of cytosolic tRNA(Lys), tRNA(Glu) and tRNA(Gln). Also essential during biosynthesis of the molybdenum cofactor. Acts by mediating the C-terminal thiocarboxylation of sulfur carriers URM1 and MOCS2A. Its N-terminus first activates URM1 and MOCS2A as acyl-adenylates (-COAMP), then the persulfide sulfur on the catalytic cysteine is transferred to URM1 and MOCS2A to form thiocarboxylation (-COSH) of their C-terminus. The reaction probably involves hydrogen sulfide that is generated from the persulfide intermediate and that acts as a nucleophile towards URM1 and MOCS2A. Subsequently, a transient disulfide bond is formed. Does not use thiosulfate as sulfur donor; NFS1 probably acting as a sulfur donor for thiocarboxylation reactions. The protein is Adenylyltransferase and sulfurtransferase MOCS3-1 of Drosophila pseudoobscura pseudoobscura (Fruit fly).